A 308-amino-acid polypeptide reads, in one-letter code: Oligopeptide transport ATP-binding protein OppF (308 aa).

The ABC transporter domain maps to 9–254; it reads VEVKNVSLTF…PIHPYTQSLL (246 aa). 46–53 serves as a coordination point for ATP; that stretch reads GESGSGKT.

This sequence belongs to the ABC transporter superfamily. In terms of assembly, the complex is composed of two ATP-binding proteins (OppD and OppF), two transmembrane proteins (OppB and OppC) and a solute-binding protein (OppA).

Its subcellular location is the cell membrane. The enzyme catalyses a [peptide](out) + ATP + H2O = a [peptide](in) + ADP + phosphate + H(+). Its function is as follows. Part of the ABC transporter complex OppABCDF involved in the uptake of oligopeptides. Probably responsible for energy coupling to the transport system. The chain is Oligopeptide transport ATP-binding protein OppF (oppF) from Streptococcus mutans serotype c (strain ATCC 700610 / UA159).